A 263-amino-acid polypeptide reads, in one-letter code: Large ribosomal subunit protein uL10m (263 aa).

The transit peptide at 1–29 (MPFSVEVEVFFLLVEDKLGWLPTLQPVRH) directs the protein to the mitochondrion. Positions 241 to 263 (QHEGDCATSTEGKPHPPDPAPDS) are disordered.

This sequence belongs to the universal ribosomal protein uL10 family. As to quaternary structure, component of the mitochondrial ribosome large subunit (39S) which comprises a 16S rRNA and about 50 distinct proteins.

It localises to the mitochondrion. The protein is Large ribosomal subunit protein uL10m (Mrpl10) of Rattus norvegicus (Rat).